A 277-amino-acid polypeptide reads, in one-letter code: Bis(5'-nucleosyl)-tetraphosphatase, symmetrical (277 aa).

Belongs to the Ap4A hydrolase family.

The catalysed reaction is P(1),P(4)-bis(5'-adenosyl) tetraphosphate + H2O = 2 ADP + 2 H(+). Hydrolyzes diadenosine 5',5'''-P1,P4-tetraphosphate to yield ADP. The protein is Bis(5'-nucleosyl)-tetraphosphatase, symmetrical of Bordetella bronchiseptica (strain ATCC BAA-588 / NCTC 13252 / RB50) (Alcaligenes bronchisepticus).